Here is a 146-residue protein sequence, read N- to C-terminus: Hemoglobin subunit beta (146 aa).

Valine 1 is modified (N-acetylvaline). Positions histidine 2–histidine 146 constitute a Globin domain. Position 12 is a phosphothreonine (threonine 12). Serine 44 is modified (phosphoserine). Lysine 59 bears the N6-acetyllysine mark. Histidine 63 lines the heme b pocket. Lysine 82 is subject to N6-acetyllysine. Histidine 92 contacts heme b. At cysteine 93 the chain carries S-nitrosocysteine. Lysine 144 carries the N6-acetyllysine modification.

Belongs to the globin family. As to quaternary structure, heterotetramer of two alpha chains and two beta chains. Red blood cells.

Functionally, involved in oxygen transport from the lung to the various peripheral tissues. The protein is Hemoglobin subunit beta (HBB) of Martes foina (Beech marten).